The primary structure comprises 363 residues: Pyrimidine monooxygenase RutA (363 aa).

FMN contacts are provided by residues 49–50 (IK), Asn-115, Glu-124, 140–141 (RY), and Ser-190.

The protein belongs to the NtaA/SnaA/DszA monooxygenase family. RutA subfamily.

It carries out the reaction uracil + FMNH2 + NADH + O2 = (Z)-3-ureidoacrylate + FMN + NAD(+) + H2O + H(+). It catalyses the reaction thymine + FMNH2 + NADH + O2 = (Z)-2-methylureidoacrylate + FMN + NAD(+) + H2O + H(+). Its function is as follows. Catalyzes the pyrimidine ring opening between N-3 and C-4 by an unusual flavin hydroperoxide-catalyzed mechanism, adding oxygen atoms in the process to yield ureidoacrylate peracid, that immediately reacts with FMN forming ureidoacrylate and FMN-N(5)-oxide. The FMN-N(5)-oxide reacts spontaneously with NADH to produce FMN. Requires the flavin reductase RutF to regenerate FMN in vivo. This chain is Pyrimidine monooxygenase RutA, found in Pantoea ananatis (strain LMG 20103).